Here is a 561-residue protein sequence, read N- to C-terminus: Alpha-1D adrenergic receptor (561 aa).

At 1-90 (MTFRDILSVT…VGGLVVSAQG (90 aa)) the chain is on the extracellular side. A disordered region spans residues 10–71 (TFEGPRSSSS…SSTGEPGAAA (62 aa)). The segment covering 21–56 (GGSGAGGGAGTVGPEGGAVGGVPGATGGGAVVGTGS) has biased composition (gly residues). Asn-60 and Asn-76 each carry an N-linked (GlcNAc...) asparagine glycan. Residues 91–115 (VGVGVFLAAFILTAVAGNLLVILSV) traverse the membrane as a helical segment. The Cytoplasmic segment spans residues 116–127 (ACNRHLQTVTNY). The chain crosses the membrane as a helical span at residues 128-153 (FIVNLAVADLLLSAAVLPFSATMEVL). Residues 154 to 163 (GFWAFGRTFC) are Extracellular-facing. A helical transmembrane segment spans residues 164-186 (DVWAAVDVLCCTASILSLCTISV). The Cytoplasmic segment spans residues 187-207 (DRYVGVRHSLKYPAIMTERKA). A helical membrane pass occupies residues 208–232 (AAILALLWAVALVVSVGPLLGWKEP). The Extracellular segment spans residues 233 to 245 (VPPDERFCGITEE). Residues 246–269 (VGYAIFSSVCSFYLPMAVIVVMYC) form a helical membrane-spanning segment. Residues 270 to 342 (RVYVVARSTT…KFSREKKAAK (73 aa)) lie on the Cytoplasmic side of the membrane. A helical transmembrane segment spans residues 343-367 (TLAIVVGVFVLCWFPFFFVLPLGSL). Over 368 to 374 (FPQLKPS) the chain is Extracellular. Residues 375–399 (EGVFKVIFWLGYFNSCVNPLIYPCS) form a helical membrane-spanning segment. Over 400–561 (SREFKRAFLR…DYSNLRETDI (162 aa)) the chain is Cytoplasmic. Cys-413 is lipidated: S-palmitoyl cysteine. Residues 452–481 (APLALTAHPGAGSADTPETQDSVSSSRKPA) are disordered. Residues 467 to 479 (TPETQDSVSSSRK) show a composition bias toward polar residues.

This sequence belongs to the G-protein coupled receptor 1 family. Adrenergic receptor subfamily. ADRA1D sub-subfamily. As to quaternary structure, interacts with FLNA (via filamin repeat 21); increases PKA-mediated phosphorylation of FLNA. Post-translationally, palmitoylated. Palmitoylation by ZDHHC21 may increase the expression of the receptor and regulate downstream signaling. Vas deferens, hippocampus, cerebral cortex, aorta, brain stem, heart and spleen.

The protein localises to the cell membrane. Its function is as follows. This alpha-adrenergic receptor mediates its effect through the influx of extracellular calcium. This is Alpha-1D adrenergic receptor (Adra1d) from Rattus norvegicus (Rat).